We begin with the raw amino-acid sequence, 201 residues long: Small ribosomal subunit protein uS4B (201 aa).

The 64-residue stretch at 93-156 (QRLDTVVYRL…RSLAVVRESL (64 aa)) folds into the S4 RNA-binding domain.

It belongs to the universal ribosomal protein uS4 family. In terms of assembly, part of the 30S ribosomal subunit. Contacts protein S5. The interaction surface between S4 and S5 is involved in control of translational fidelity.

Its function is as follows. One of the primary rRNA binding proteins, it binds directly to 16S rRNA where it nucleates assembly of the body of the 30S subunit. In terms of biological role, with S5 and S12 plays an important role in translational accuracy. The polypeptide is Small ribosomal subunit protein uS4B (Symbiobacterium thermophilum (strain DSM 24528 / JCM 14929 / IAM 14863 / T)).